The primary structure comprises 290 residues: uncharacterized protein (290 aa).

Catalysis depends on lysine 203, which acts as the Schiff-base intermediate with substrate.

It belongs to the DeoC/FbaB aldolase family.

This is an uncharacterized protein from Pasteurella multocida (strain Pm70).